The chain runs to 255 residues: Vitamin B12 import ATP-binding protein BtuD (255 aa).

Residues 2 to 240 enclose the ABC transporter domain; sequence MHVKHIALGS…EGLAEVFQTQ (239 aa). 30–37 provides a ligand contact to ATP; that stretch reads GPNGSGKS.

It belongs to the ABC transporter superfamily. Vitamin B12 importer (TC 3.A.1.13.1) family. In terms of assembly, the complex is composed of two ATP-binding proteins (BtuD), two transmembrane proteins (BtuC) and a solute-binding protein (BtuF).

It localises to the cell inner membrane. It carries out the reaction an R-cob(III)alamin(out) + ATP + H2O = an R-cob(III)alamin(in) + ADP + phosphate + H(+). Part of the ABC transporter complex BtuCDF involved in vitamin B12 import. Responsible for energy coupling to the transport system. The polypeptide is Vitamin B12 import ATP-binding protein BtuD (Vibrio campbellii (strain ATCC BAA-1116)).